The chain runs to 211 residues: Large ribosomal subunit protein uL3 (211 aa).

The protein belongs to the universal ribosomal protein uL3 family. Part of the 50S ribosomal subunit. Forms a cluster with proteins L14 and L19.

Functionally, one of the primary rRNA binding proteins, it binds directly near the 3'-end of the 23S rRNA, where it nucleates assembly of the 50S subunit. This is Large ribosomal subunit protein uL3 from Akkermansia muciniphila (strain ATCC BAA-835 / DSM 22959 / JCM 33894 / BCRC 81048 / CCUG 64013 / CIP 107961 / Muc).